The primary structure comprises 276 residues: Large ribosomal subunit protein uL2 (276 aa).

Positions 219-276 (TVRGSVMNPNDHPHGGGEGRSPIGRPSPVTPWGKPALGYKTRKKNKASNKLIVSRRTK) are disordered. The span at 258–276 (KTRKKNKASNKLIVSRRTK) shows a compositional bias: basic residues.

This sequence belongs to the universal ribosomal protein uL2 family. In terms of assembly, part of the 50S ribosomal subunit. Forms a bridge to the 30S subunit in the 70S ribosome.

In terms of biological role, one of the primary rRNA binding proteins. Required for association of the 30S and 50S subunits to form the 70S ribosome, for tRNA binding and peptide bond formation. It has been suggested to have peptidyltransferase activity; this is somewhat controversial. Makes several contacts with the 16S rRNA in the 70S ribosome. The chain is Large ribosomal subunit protein uL2 from Clostridioides difficile (strain 630) (Peptoclostridium difficile).